Reading from the N-terminus, the 37-residue chain is Cytochrome b6-f complex subunit 5 (37 aa).

The helical transmembrane segment at 5-25 (LLCGIVLGLVPVTIAGLFVTA) threads the bilayer.

Belongs to the PetG family. In terms of assembly, the 4 large subunits of the cytochrome b6-f complex are cytochrome b6, subunit IV (17 kDa polypeptide, PetD), cytochrome f and the Rieske protein, while the 4 small subunits are PetG, PetL, PetM and PetN. The complex functions as a dimer.

It is found in the plastid. It localises to the chloroplast thylakoid membrane. Its function is as follows. Component of the cytochrome b6-f complex, which mediates electron transfer between photosystem II (PSII) and photosystem I (PSI), cyclic electron flow around PSI, and state transitions. PetG is required for either the stability or assembly of the cytochrome b6-f complex. This Chlamydomonas reinhardtii (Chlamydomonas smithii) protein is Cytochrome b6-f complex subunit 5.